The chain runs to 299 residues: Taste receptor type 2 member 4 (299 aa).

Residues 1-9 are Extracellular-facing; it reads MLRLFYFSA. A helical membrane pass occupies residues 10–30; that stretch reads IIASVILNFVGIIMNLFITVV. Residues 31 to 46 lie on the Cytoplasmic side of the membrane; the sequence is NCKTWVKSHRISSSDR. A helical membrane pass occupies residues 47-67; sequence ILFSLGITRFLMLGLFLVNTI. The Extracellular portion of the chain corresponds to 68-81; sequence YFVSSNTERSVYLS. Residues 82-102 form a helical membrane-spanning segment; the sequence is AFFVLCFMFLDSSSLWFVTLL. At 103 to 131 the chain is on the cytoplasmic side; that stretch reads NILYCVKITNFQHSVFLLLKRNISPKIPR. Residues 132-152 traverse the membrane as a helical segment; that stretch reads LLLACVLISAFTTCLYITLSQ. The Extracellular portion of the chain corresponds to 153-172; it reads ASPFPELVTTRNNTSFNINE. N-linked (GlcNAc...) asparagine glycans are attached at residues Asn164 and Asn165. The chain crosses the membrane as a helical span at residues 173–193; sequence GILSLVVSLVLSSSLQFIINV. Residues 194-230 lie on the Cytoplasmic side of the membrane; that stretch reads TSASLLIHSLRRHIQKMQKNATGFWNPQTEAHVGAMK. Residues 231 to 251 form a helical membrane-spanning segment; sequence LMVYFLILYIPYSVATLVQYL. The Extracellular portion of the chain corresponds to 252-262; it reads PFYAGMDMGTK. Residues 263-283 traverse the membrane as a helical segment; it reads SICLIFATLYSPGHSVLIIIT. At 284–299 the chain is on the cytoplasmic side; sequence HPKLKTTAKKILCFKK.

The protein belongs to the G-protein coupled receptor T2R family.

The protein resides in the membrane. It is found in the cell projection. Its subcellular location is the cilium membrane. Gustducin-coupled receptor implicated in the perception of bitter compounds in the oral cavity and the gastrointestinal tract. Signals through PLCB2 and the calcium-regulated cation channel TRPM5. In airway epithelial cells, binding of denatonium increases the intracellular calcium ion concentration and stimulates ciliary beat frequency. The sequence is that of Taste receptor type 2 member 4 (TAS2R4) from Pan paniscus (Pygmy chimpanzee).